The primary structure comprises 432 residues: Gamma-glutamyl phosphate reductase (432 aa).

It belongs to the gamma-glutamyl phosphate reductase family.

The protein localises to the cytoplasm. It carries out the reaction L-glutamate 5-semialdehyde + phosphate + NADP(+) = L-glutamyl 5-phosphate + NADPH + H(+). It participates in amino-acid biosynthesis; L-proline biosynthesis; L-glutamate 5-semialdehyde from L-glutamate: step 2/2. Functionally, catalyzes the NADPH-dependent reduction of L-glutamate 5-phosphate into L-glutamate 5-semialdehyde and phosphate. The product spontaneously undergoes cyclization to form 1-pyrroline-5-carboxylate. The protein is Gamma-glutamyl phosphate reductase of Methylorubrum extorquens (strain CM4 / NCIMB 13688) (Methylobacterium extorquens).